We begin with the raw amino-acid sequence, 110 residues long: Large ribosomal subunit protein uL22 (110 aa).

It belongs to the universal ribosomal protein uL22 family. As to quaternary structure, part of the 50S ribosomal subunit.

In terms of biological role, this protein binds specifically to 23S rRNA; its binding is stimulated by other ribosomal proteins, e.g. L4, L17, and L20. It is important during the early stages of 50S assembly. It makes multiple contacts with different domains of the 23S rRNA in the assembled 50S subunit and ribosome. The globular domain of the protein is located near the polypeptide exit tunnel on the outside of the subunit, while an extended beta-hairpin is found that lines the wall of the exit tunnel in the center of the 70S ribosome. The protein is Large ribosomal subunit protein uL22 of Shewanella frigidimarina (strain NCIMB 400).